The following is a 352-amino-acid chain: Biotin synthase (352 aa).

The Radical SAM core domain occupies 44–262; sequence NRVQVSTLLS…LAVARIMMPK (219 aa). [4Fe-4S] cluster contacts are provided by Cys-59, Cys-63, and Cys-66. Residues Cys-103, Cys-134, Cys-194, and Arg-266 each coordinate [2Fe-2S] cluster.

The protein belongs to the radical SAM superfamily. Biotin synthase family. Homodimer. It depends on [4Fe-4S] cluster as a cofactor. Requires [2Fe-2S] cluster as cofactor.

The enzyme catalyses (4R,5S)-dethiobiotin + (sulfur carrier)-SH + 2 reduced [2Fe-2S]-[ferredoxin] + 2 S-adenosyl-L-methionine = (sulfur carrier)-H + biotin + 2 5'-deoxyadenosine + 2 L-methionine + 2 oxidized [2Fe-2S]-[ferredoxin]. Its pathway is cofactor biosynthesis; biotin biosynthesis; biotin from 7,8-diaminononanoate: step 2/2. Its function is as follows. Catalyzes the conversion of dethiobiotin (DTB) to biotin by the insertion of a sulfur atom into dethiobiotin via a radical-based mechanism. This Pseudomonas aeruginosa (strain UCBPP-PA14) protein is Biotin synthase.